Reading from the N-terminus, the 389-residue chain is Gustatory receptor 68a (389 aa).

The Cytoplasmic segment spans residues 1 to 42; the sequence is MKIYQDIYPISKPSQIFAILPFYSGDVDDGFRFGGLGRWYGR. Residues 43–63 form a helical membrane-spanning segment; sequence LVALIILIGSLTLGEDVLFAS. The Extracellular segment spans residues 64 to 82; it reads KEYRLVASAQGDTEEINRT. Residue asparagine 80 is glycosylated (N-linked (GlcNAc...) asparagine). The chain crosses the membrane as a helical span at residues 83–103; the sequence is IETLLCIISYTMVVLSSVQNA. Residues 104 to 133 are Cytoplasmic-facing; that stretch reads SRHFRTLHDIAKIDEYLLANGFRETYSCRN. A helical transmembrane segment spans residues 134-154; the sequence is LTILVTSAAGGVLAVAFYYIH. Over 155 to 164 the chain is Extracellular; sequence YRSGIGAKRQ. Residues 165-185 traverse the membrane as a helical segment; that stretch reads IILLLIYFLQLLYSTLLALYL. Residues 186 to 236 lie on the Cytoplasmic side of the membrane; the sequence is RTLMMNLAQRIGFLNQKLDTFNLQDCGHMENWRELSNLIEVLCKFRYITEN. The chain crosses the membrane as a helical span at residues 237 to 257; that stretch reads INCVAGVSLLFYFGFSFYTVT. The N-linked (GlcNAc...) asparagine glycan is linked to asparagine 258. Over 258–281 the chain is Extracellular; the sequence is NQSYLAFATLTAGSLSSKTEVADT. The helical transmembrane segment at 282 to 302 threads the bilayer; the sequence is IGLSCIWVLAETITMIVICSA. The Cytoplasmic segment spans residues 303-352; that stretch reads CDGLASEVNGTAQILARIYGKSKQFQNLIDKFLTKSIKQDLQFTAYGFFS. The chain crosses the membrane as a helical span at residues 353–373; it reads IDNSTLFKIFSAVTTYLVILI. Topologically, residues 374–389 are extracellular; the sequence is QFKQLEDSKVEDISQA.

The protein belongs to the insect chemoreceptor superfamily. Gustatory receptor (GR) family. Gr21a subfamily. In terms of tissue distribution, expressed in chemosensory neurons of about 20 male-specific gustatory bristles in the forelegs. No expression is seen in the mechanosensory neurons. In larvae, expressed in the ventral pharyngeal sense organ.

It localises to the cell membrane. Its function is as follows. Dsx-dependent essential component of pheromone-driven courtship behavior. Recognizes a female pheromone involved in the second step (tapping step) of the courtship display which is essential for efficient execution of the entire courtship sequence and timely mating. Required for detection of the male sex pheromone CH503 which is transferred from males to females during mating and inhibits courtship behavior by other males. Gr68a-expressing neurons in the male foreleg relay signals to the suboesophageal zone (SEZ) and courtship suppression is mediated by the release of the neuropeptide tachykinin from a cluster of 8-10 neurons in the SEZ. This Drosophila melanogaster (Fruit fly) protein is Gustatory receptor 68a (Gr68a).